The following is a 222-amino-acid chain: Chymotrypsin-1 (222 aa).

Positions 1–221 (IVGGKDAPVG…FVSWINANLK (221 aa)) constitute a Peptidase S1 domain. Residues Cys-26 and Cys-42 are joined by a disulfide bond. Residues His-41 and Asp-87 each act as charge relay system in the active site. 2 disulfides stabilise this stretch: Cys-151/Cys-164 and Cys-174/Cys-198. Ser-178 functions as the Charge relay system in the catalytic mechanism.

It belongs to the peptidase S1 family.

It localises to the secreted. It is found in the extracellular space. It carries out the reaction Preferential cleavage: Tyr-|-Xaa, Trp-|-Xaa, Phe-|-Xaa, Leu-|-Xaa.. The protein is Chymotrypsin-1 of Solenopsis invicta (Red imported fire ant).